We begin with the raw amino-acid sequence, 613 residues long: Dihydroxy-acid dehydratase 3 (613 aa).

Asp-81 is a binding site for Mg(2+). Cys-122 provides a ligand contact to [2Fe-2S] cluster. Mg(2+) contacts are provided by Asp-123 and Lys-124. The residue at position 124 (Lys-124) is an N6-carboxylysine. A [2Fe-2S] cluster-binding site is contributed by Cys-197. Glu-493 serves as a coordination point for Mg(2+). Residue Ser-519 is the Proton acceptor of the active site.

Belongs to the IlvD/Edd family. Homodimer. The cofactor is [2Fe-2S] cluster. Mg(2+) is required as a cofactor.

It carries out the reaction (2R)-2,3-dihydroxy-3-methylbutanoate = 3-methyl-2-oxobutanoate + H2O. The enzyme catalyses (2R,3R)-2,3-dihydroxy-3-methylpentanoate = (S)-3-methyl-2-oxopentanoate + H2O. It functions in the pathway amino-acid biosynthesis; L-isoleucine biosynthesis; L-isoleucine from 2-oxobutanoate: step 3/4. Its pathway is amino-acid biosynthesis; L-valine biosynthesis; L-valine from pyruvate: step 3/4. Its function is as follows. Functions in the biosynthesis of branched-chain amino acids. Catalyzes the dehydration of (2R,3R)-2,3-dihydroxy-3-methylpentanoate (2,3-dihydroxy-3-methylvalerate) into 2-oxo-3-methylpentanoate (2-oxo-3-methylvalerate) and of (2R)-2,3-dihydroxy-3-methylbutanoate (2,3-dihydroxyisovalerate) into 2-oxo-3-methylbutanoate (2-oxoisovalerate), the penultimate precursor to L-isoleucine and L-valine, respectively. The chain is Dihydroxy-acid dehydratase 3 from Nocardia farcinica (strain IFM 10152).